Here is a 351-residue protein sequence, read N- to C-terminus: Photosystem II D2 protein (351 aa).

The chain crosses the membrane as a helical span at residues 39-59; sequence TAYLSIGGWLTGTTFVTSWYT. His-116 provides a ligand contact to chlorophyll a. The helical transmembrane segment at 123-139 threads the bilayer; it reads GFMLRQFEIARLVGIRP. Positions 128 and 141 each coordinate pheophytin a. The chain crosses the membrane as a helical span at residues 151-164; it reads VFVSVFLMYPLGQS. Position 196 (His-196) interacts with chlorophyll a. Residues 206–226 traverse the membrane as a helical segment; it reads GALLCAIHGATVENTLFEDGE. A plastoquinone-binding residues include His-213 and Phe-260. His-213 contributes to the Fe cation binding site. Position 267 (His-267) interacts with Fe cation. The chain crosses the membrane as a helical span at residues 277-293; the sequence is GLWTSAIGIIGLALNLR.

Belongs to the reaction center PufL/M/PsbA/D family. As to quaternary structure, PSII is composed of 1 copy each of membrane proteins PsbA, PsbB, PsbC, PsbD, PsbE, PsbF, PsbH, PsbI, PsbJ, PsbK, PsbL, PsbM, PsbT, PsbX, PsbY, PsbZ, Psb30/Ycf12, peripheral proteins PsbO, CyanoQ (PsbQ), PsbU, PsbV and a large number of cofactors. It forms dimeric complexes. The D1/D2 heterodimer binds P680, chlorophylls that are the primary electron donor of PSII, and subsequent electron acceptors. It shares a non-heme iron and each subunit binds pheophytin, quinone, additional chlorophylls, carotenoids and lipids. There is also a Cl(-1) ion associated with D1 and D2, which is required for oxygen evolution. The PSII complex binds additional chlorophylls, carotenoids and specific lipids. is required as a cofactor.

The protein localises to the cellular thylakoid membrane. The enzyme catalyses 2 a plastoquinone + 4 hnu + 2 H2O = 2 a plastoquinol + O2. Photosystem II (PSII) is a light-driven water:plastoquinone oxidoreductase that uses light energy to abstract electrons from H(2)O, generating O(2) and a proton gradient subsequently used for ATP formation. It consists of a core antenna complex that captures photons, and an electron transfer chain that converts photonic excitation into a charge separation. The D1/D2 (PsbA/PsbD) reaction center heterodimer binds P680, the primary electron donor of PSII as well as several subsequent electron acceptors. D2 is needed for assembly of a stable PSII complex. This is Photosystem II D2 protein from Synechococcus sp. (strain CC9311).